A 363-amino-acid chain; its full sequence is Probable protein phosphatase 2C member 13, mitochondrial (363 aa).

The transit peptide at 1-59 (MVCFASLRRALPLLLRATTTTTPRFLLPRALSGGVGGGAAVDARALLRGHSGWRGLRVA) directs the protein to the mitochondrion. The PPM-type phosphatase domain occupies 111–357 (KCGYSSFRGK…DNITCIVVQF (247 aa)). Positions 147, 148, 309, and 348 each coordinate Mn(2+).

It belongs to the PP2C family. It depends on Mg(2+) as a cofactor. Mn(2+) is required as a cofactor. Highly expressed in mature pollen grains.

Its subcellular location is the mitochondrion. It catalyses the reaction O-phospho-L-seryl-[protein] + H2O = L-seryl-[protein] + phosphate. The enzyme catalyses O-phospho-L-threonyl-[protein] + H2O = L-threonyl-[protein] + phosphate. Probable protein phosphatase that may play a role as a mitochondrial signal transduction mediator in pollen germination. May function in retrograde signaling from the mitochondria to the nucleus. May be a downstream factor of cytoplasmic male sterility (CMS). CMS is caused by genetic incompatibility between nuclei and mitochondria within male reproductive organs. This is Probable protein phosphatase 2C member 13, mitochondrial from Oryza sativa subsp. japonica (Rice).